A 144-amino-acid chain; its full sequence is Transcription antitermination protein NusB (144 aa).

It belongs to the NusB family.

Its function is as follows. Involved in transcription antitermination. Required for transcription of ribosomal RNA (rRNA) genes. Binds specifically to the boxA antiterminator sequence of the ribosomal RNA (rrn) operons. This is Transcription antitermination protein NusB from Paraburkholderia phytofirmans (strain DSM 17436 / LMG 22146 / PsJN) (Burkholderia phytofirmans).